Here is a 493-residue protein sequence, read N- to C-terminus: Guanosine-5'-triphosphate,3'-diphosphate pyrophosphatase (493 aa).

It belongs to the GppA/Ppx family. GppA subfamily.

It carries out the reaction guanosine 3'-diphosphate 5'-triphosphate + H2O = guanosine 3',5'-bis(diphosphate) + phosphate + H(+). It functions in the pathway purine metabolism; ppGpp biosynthesis; ppGpp from GTP: step 2/2. Functionally, catalyzes the conversion of pppGpp to ppGpp. Guanosine pentaphosphate (pppGpp) is a cytoplasmic signaling molecule which together with ppGpp controls the 'stringent response', an adaptive process that allows bacteria to respond to amino acid starvation, resulting in the coordinated regulation of numerous cellular activities. The chain is Guanosine-5'-triphosphate,3'-diphosphate pyrophosphatase from Salmonella gallinarum (strain 287/91 / NCTC 13346).